A 117-amino-acid polypeptide reads, in one-letter code: Large ribosomal subunit protein bL20c (117 aa).

The protein belongs to the bacterial ribosomal protein bL20 family.

It localises to the plastid. It is found in the chloroplast. Functionally, binds directly to 23S ribosomal RNA and is necessary for the in vitro assembly process of the 50S ribosomal subunit. It is not involved in the protein synthesizing functions of that subunit. This Aethionema grandiflorum (Persian stone-cress) protein is Large ribosomal subunit protein bL20c.